The chain runs to 231 residues: Large ribosomal subunit protein uL1 (231 aa).

The protein belongs to the universal ribosomal protein uL1 family. As to quaternary structure, part of the 50S ribosomal subunit.

Binds directly to 23S rRNA. The L1 stalk is quite mobile in the ribosome, and is involved in E site tRNA release. Its function is as follows. Protein L1 is also a translational repressor protein, it controls the translation of the L11 operon by binding to its mRNA. The polypeptide is Large ribosomal subunit protein uL1 (Saccharophagus degradans (strain 2-40 / ATCC 43961 / DSM 17024)).